A 178-amino-acid chain; its full sequence is Cytidylate kinase (178 aa).

7–15 provides a ligand contact to ATP; sequence GLPGTGTTT.

This sequence belongs to the cytidylate kinase family. Type 2 subfamily.

Its subcellular location is the cytoplasm. The catalysed reaction is CMP + ATP = CDP + ADP. It catalyses the reaction dCMP + ATP = dCDP + ADP. The chain is Cytidylate kinase from Methanococcus maripaludis (strain C5 / ATCC BAA-1333).